The primary structure comprises 426 residues: Adenylosuccinate synthetase 2 (426 aa).

Residues 12-18 (GDEGKGK) and 40-42 (GHT) contribute to the GTP site. Asp-13 acts as the Proton acceptor in catalysis. The Mg(2+) site is built by Asp-13 and Gly-40. IMP is bound by residues 13–16 (DEGK), 38–41 (NAGH), Arg-147, Asn-223, Thr-238, and Arg-302. His-41 (proton donor) is an active-site residue. Position 298 to 304 (298 to 304 (TNTGRRR)) interacts with substrate. GTP-binding positions include Arg-304, 330 to 332 (KLD), and 412 to 414 (GVG).

This sequence belongs to the adenylosuccinate synthetase family. Homodimer. It depends on Mg(2+) as a cofactor.

It is found in the cytoplasm. The enzyme catalyses IMP + L-aspartate + GTP = N(6)-(1,2-dicarboxyethyl)-AMP + GDP + phosphate + 2 H(+). The protein operates within purine metabolism; AMP biosynthesis via de novo pathway; AMP from IMP: step 1/2. Its function is as follows. Plays an important role in the de novo pathway and in the salvage pathway of purine nucleotide biosynthesis. Catalyzes the first committed step in the biosynthesis of AMP from IMP. This is Adenylosuccinate synthetase 2 from Laccaria bicolor (strain S238N-H82 / ATCC MYA-4686) (Bicoloured deceiver).